The primary structure comprises 477 residues: Mannitol 2-dehydrogenase (477 aa).

NAD(+) is bound at residue 19 to 30 (IVHIGVGNFHRA).

It belongs to the mannitol dehydrogenase family. In terms of assembly, monomer.

The catalysed reaction is D-mannitol + NAD(+) = D-fructose + NADH + H(+). The protein is Mannitol 2-dehydrogenase (mtlK) of Cereibacter sphaeroides (Rhodobacter sphaeroides).